The primary structure comprises 164 residues: SsrA-binding protein (164 aa).

A disordered region spans residues 143-164 (HDKRQDEKQKSIKKEINSVLKR). The segment covering 145 to 158 (KRQDEKQKSIKKEI) has biased composition (basic and acidic residues).

This sequence belongs to the SmpB family.

The protein resides in the cytoplasm. Its function is as follows. Required for rescue of stalled ribosomes mediated by trans-translation. Binds to transfer-messenger RNA (tmRNA), required for stable association of tmRNA with ribosomes. tmRNA and SmpB together mimic tRNA shape, replacing the anticodon stem-loop with SmpB. tmRNA is encoded by the ssrA gene; the 2 termini fold to resemble tRNA(Ala) and it encodes a 'tag peptide', a short internal open reading frame. During trans-translation Ala-aminoacylated tmRNA acts like a tRNA, entering the A-site of stalled ribosomes, displacing the stalled mRNA. The ribosome then switches to translate the ORF on the tmRNA; the nascent peptide is terminated with the 'tag peptide' encoded by the tmRNA and targeted for degradation. The ribosome is freed to recommence translation, which seems to be the essential function of trans-translation. In Prochlorococcus marinus (strain MIT 9312), this protein is SsrA-binding protein.